A 460-amino-acid chain; its full sequence is Argininosuccinate lyase (460 aa).

This sequence belongs to the lyase 1 family. Argininosuccinate lyase subfamily.

It is found in the cytoplasm. The catalysed reaction is 2-(N(omega)-L-arginino)succinate = fumarate + L-arginine. The protein operates within amino-acid biosynthesis; L-arginine biosynthesis; L-arginine from L-ornithine and carbamoyl phosphate: step 3/3. The polypeptide is Argininosuccinate lyase (Edwardsiella ictaluri (strain 93-146)).